Reading from the N-terminus, the 93-residue chain is Putative regulatory protein Fnod_1678 (93 aa).

The protein belongs to the RemA family.

The sequence is that of Putative regulatory protein Fnod_1678 from Fervidobacterium nodosum (strain ATCC 35602 / DSM 5306 / Rt17-B1).